Here is a 175-residue protein sequence, read N- to C-terminus: Co-chaperone protein HscB homolog (175 aa).

The J domain maps to 7-79 (SHFDLFHLPA…LKRATYLLSL (73 aa)).

This sequence belongs to the HscB family. As to quaternary structure, interacts with HscA and stimulates its ATPase activity.

Its function is as follows. Co-chaperone involved in the maturation of iron-sulfur cluster-containing proteins. Seems to help targeting proteins to be folded toward HscA. The protein is Co-chaperone protein HscB homolog of Burkholderia multivorans (strain ATCC 17616 / 249).